The chain runs to 268 residues: Tryptophan synthase alpha chain (268 aa).

Residues Glu-49 and Asp-60 each act as proton acceptor in the active site.

The protein belongs to the TrpA family. In terms of assembly, tetramer of two alpha and two beta chains.

The enzyme catalyses (1S,2R)-1-C-(indol-3-yl)glycerol 3-phosphate + L-serine = D-glyceraldehyde 3-phosphate + L-tryptophan + H2O. Its pathway is amino-acid biosynthesis; L-tryptophan biosynthesis; L-tryptophan from chorismate: step 5/5. In terms of biological role, the alpha subunit is responsible for the aldol cleavage of indoleglycerol phosphate to indole and glyceraldehyde 3-phosphate. This is Tryptophan synthase alpha chain from Escherichia coli (strain ATCC 8739 / DSM 1576 / NBRC 3972 / NCIMB 8545 / WDCM 00012 / Crooks).